A 511-amino-acid chain; its full sequence is 2-methylbutanal oxime monooxygenase (511 aa).

Transmembrane regions (helical) follow at residues 10 to 30 (PPQWLSILAVFLLPILTLLLF) and 304 to 324 (ILMNVFVGGIDTSAVTITWAF). Position 451 (cysteine 451) interacts with heme.

It belongs to the cytochrome P450 family. Requires heme as cofactor. In terms of tissue distribution, expressed in storage roots, primary roots, petioles and vascular tissues. Expressed in the outer cortex cells, the endodermis and around the xylem, phloem cells and laticifers.

It localises to the microsome membrane. The enzyme catalyses (1E,2S)-2-methylbutanal oxime + reduced [NADPH--hemoprotein reductase] + O2 = 2-hydroxy-2-methylbutanenitrile + oxidized [NADPH--hemoprotein reductase] + 2 H2O + H(+). It carries out the reaction (E)-2-methylpropanal oxime + reduced [NADPH--hemoprotein reductase] + O2 = 2-hydroxy-2-methylpropanenitrile + oxidized [NADPH--hemoprotein reductase] + 2 H2O + H(+). Its function is as follows. Catalyzes the conversion of (E)-2-methylpropanal oxime (valox) to 2-hydroxy-2-methylpropanenitrile (acetone cyanohydrin) and of (E)-2-methylbutanal oxime (ilox) to 2-hydroxy-2-methylbutyronitrile. The reaction takes place in three steps. First, the oxime is isomerized to the (Z)- isomer, next the (Z)-isomer is dehydrated to the corresponding nitrile, followed by a C-hydroxylation of the nitrile. Can use both aliphatic and aromatic oximes as substrates. The polypeptide is 2-methylbutanal oxime monooxygenase (CYP71E7) (Manihot esculenta (Cassava)).